The sequence spans 188 residues: NADH-quinone oxidoreductase subunit B (188 aa).

4 residues coordinate [4Fe-4S] cluster: C67, C68, C132, and C162.

This sequence belongs to the complex I 20 kDa subunit family. As to quaternary structure, NDH-1 is composed of 14 different subunits. Subunits NuoB, C, D, E, F, and G constitute the peripheral sector of the complex. It depends on [4Fe-4S] cluster as a cofactor.

Its subcellular location is the cell inner membrane. The catalysed reaction is a quinone + NADH + 5 H(+)(in) = a quinol + NAD(+) + 4 H(+)(out). In terms of biological role, NDH-1 shuttles electrons from NADH, via FMN and iron-sulfur (Fe-S) centers, to quinones in the respiratory chain. Couples the redox reaction to proton translocation (for every two electrons transferred, four hydrogen ions are translocated across the cytoplasmic membrane), and thus conserves the redox energy in a proton gradient. In Maricaulis maris (strain MCS10) (Caulobacter maris), this protein is NADH-quinone oxidoreductase subunit B.